Consider the following 242-residue polypeptide: Uridylate kinase (242 aa).

11–14 contacts ATP; sequence KLSG. The interval 19-24 is involved in allosteric activation by GTP; it reads GEKGVG. UMP is bound at residue Gly-53. ATP contacts are provided by Gly-54 and Arg-58. UMP-binding positions include Asp-73 and 134–141; that span reads IGSPYFST. ATP is bound by residues Asn-162, Tyr-168, and Asp-171.

Belongs to the UMP kinase family. In terms of assembly, homohexamer.

The protein resides in the cytoplasm. The catalysed reaction is UMP + ATP = UDP + ADP. It participates in pyrimidine metabolism; CTP biosynthesis via de novo pathway; UDP from UMP (UMPK route): step 1/1. Its activity is regulated as follows. Allosterically activated by GTP. Inhibited by UTP. Catalyzes the reversible phosphorylation of UMP to UDP. This Streptococcus pyogenes serotype M1 protein is Uridylate kinase.